Reading from the N-terminus, the 433-residue chain is Enolase (433 aa).

A (2R)-2-phosphoglycerate-binding site is contributed by Gln-167. The Proton donor role is filled by Glu-209. Asp-246, Glu-291, and Asp-318 together coordinate Mg(2+). Residues Lys-343, Arg-372, Ser-373, and Lys-394 each contribute to the (2R)-2-phosphoglycerate site. The active-site Proton acceptor is the Lys-343.

This sequence belongs to the enolase family. As to quaternary structure, component of the RNA degradosome, a multiprotein complex involved in RNA processing and mRNA degradation. Mg(2+) serves as cofactor.

It is found in the cytoplasm. It localises to the secreted. The protein localises to the cell surface. The enzyme catalyses (2R)-2-phosphoglycerate = phosphoenolpyruvate + H2O. Its pathway is carbohydrate degradation; glycolysis; pyruvate from D-glyceraldehyde 3-phosphate: step 4/5. Functionally, catalyzes the reversible conversion of 2-phosphoglycerate (2-PG) into phosphoenolpyruvate (PEP). It is essential for the degradation of carbohydrates via glycolysis. This Sodalis glossinidius (strain morsitans) protein is Enolase.